The chain runs to 570 residues: Adenine deaminase (570 aa).

The protein belongs to the metallo-dependent hydrolases superfamily. Adenine deaminase family. It depends on Mn(2+) as a cofactor.

It catalyses the reaction adenine + H2O + H(+) = hypoxanthine + NH4(+). The chain is Adenine deaminase from Oleidesulfovibrio alaskensis (strain ATCC BAA-1058 / DSM 17464 / G20) (Desulfovibrio alaskensis).